Here is a 606-residue protein sequence, read N- to C-terminus: Acetylcholinesterase (606 aa).

The N-terminal stretch at 1-28 is a signal peptide; sequence MPSCQPGKMPAPWPWWLQLLLCIPSCVA. A disulfide bridge connects residues cysteine 98 and cysteine 125. Serine 231 (acyl-ester intermediate) is an active-site residue. Cysteines 285 and 296 form a disulfide. An N-linked (GlcNAc...) asparagine glycan is attached at asparagine 289. Glutamate 358 functions as the Charge relay system in the catalytic mechanism. Asparagine 374 carries N-linked (GlcNAc...) asparagine glycosylation. Cysteine 433 and cysteine 552 are oxidised to a cystine. Residue histidine 471 is the Charge relay system of the active site. Asparagine 484 is a glycosylation site (N-linked (GlcNAc...) asparagine).

Belongs to the type-B carboxylesterase/lipase family. In terms of assembly, isoform S is monomeric. Isoform T can form oligomers, including collagen-tailed forms. The N-terminus is blocked. As to expression, liver and muscle contain both isoform T and isoform S. Venom gland predominantly contains isoform S.

The protein resides in the synapse. It is found in the secreted. It localises to the cell membrane. It carries out the reaction acetylcholine + H2O = choline + acetate + H(+). Inhibited by active site inhibitors: edrophonium, trimethyl-(m-acetamidopheny1)-ammonium iodide, and trimethyl-(p-acetarnidopheny1)-ammonium iodide. Inhibited by both active and peripheral site inhibitors: decamethonium, and BW284c51. Inhibited by peripheral site inhibitors: snake acetylcholinesterase fasciculin-2, propidium, gallamine, D-tubocurarine, and tacrine. Also inhibited by antibodies Elec410 and Fab410. In terms of biological role, in muscle, it terminates signal transduction at the neuromuscular junction by rapid hydrolysis of the acetylcholine released into the synaptic cleft. In liver, its function is unclear: it could serve as a safeguard against any diffusion of acetylcholine from synapses into the circulation. In venom, its toxic role is unclear: it could result in less musculatory control by rapidly hydrolyzing acetylcholine, or that it works synergistically with alkaline phosphatase (ALP) in paralyzing prey through hypotension. The chain is Acetylcholinesterase (ACHE) from Bungarus fasciatus (Banded krait).